The primary structure comprises 515 residues: Histidine ammonia-lyase (515 aa).

The 5-imidazolinone (Ala-Gly) cross-link spans alanine 148 to glycine 150. Serine 149 carries the 2,3-didehydroalanine (Ser) modification.

Belongs to the PAL/histidase family. In terms of processing, contains an active site 4-methylidene-imidazol-5-one (MIO), which is formed autocatalytically by cyclization and dehydration of residues Ala-Ser-Gly.

The protein resides in the cytoplasm. The enzyme catalyses L-histidine = trans-urocanate + NH4(+). It participates in amino-acid degradation; L-histidine degradation into L-glutamate; N-formimidoyl-L-glutamate from L-histidine: step 1/3. This Pseudomonas syringae pv. tomato (strain ATCC BAA-871 / DC3000) protein is Histidine ammonia-lyase.